The primary structure comprises 383 residues: Putative F-box protein At1g77650 (383 aa).

In terms of domain architecture, F-box spans methionine 1 to leucine 47.

The polypeptide is Putative F-box protein At1g77650 (Arabidopsis thaliana (Mouse-ear cress)).